The sequence spans 86 residues: Anti-adapter protein IraP (86 aa).

The stretch at 1 to 36 (MKNLIAELLFKLAQKEEESKELCAQVEALEIIVTAM) forms a coiled coil.

This sequence belongs to the IraP family. As to quaternary structure, interacts with RssB.

Its subcellular location is the cytoplasm. In terms of biological role, inhibits RpoS proteolysis by regulating RssB activity, thereby increasing the stability of the sigma stress factor RpoS especially during phosphate starvation, but also in stationary phase and during nitrogen starvation. Its effect on RpoS stability is due to its interaction with RssB, which probably blocks the interaction of RssB with RpoS, and the consequent delivery of the RssB-RpoS complex to the ClpXP protein degradation pathway. This Shigella sonnei (strain Ss046) protein is Anti-adapter protein IraP.